The following is a 428-amino-acid chain: Probable methanogen homoaconitase large subunit (428 aa).

Positions 304, 364, and 367 each coordinate [4Fe-4S] cluster.

It belongs to the aconitase/IPM isomerase family. LeuC type 2 subfamily. Heterotetramer of 2 HacA and 2 HacB proteins.

The catalysed reaction is (2R)-homocitrate = (2R,3S)-homoisocitrate. It catalyses the reaction (2R)-homocitrate = cis-homoaconitate + H2O. It carries out the reaction (2R,3S)-homoisocitrate = cis-homoaconitate + H2O. The enzyme catalyses cis-(homo)2aconitate + H2O = (2R,3S)-iso(homo)2citrate. The catalysed reaction is cis-(homo)3aconitate + H2O = (2R,3S)-iso(homo)3citrate. Its pathway is organic acid metabolism; 2-oxosuberate biosynthesis. Functionally, component of a hydro-lyase with broad substrate specificity for cis-unsaturated tricarboxylic acids. Catalyzes both the reversible dehydration of (R)-homocitrate ((R)-2-hydroxybutane-1,2,4-tricarboxylate) to produce cis-homoaconitate ((Z)-but-1-ene-1,2,4-tricarboxylate), and its hydration to homoisocitrate ((1R,2S)-1-hydroxybutane-1,2,4-tricarboxylate). Is also able to hydrate the analogous longer chain substrates cis-homo(2)-aconitate, cis-homo(3)-aconitate. These reactions are part of the biosynthesis pathway of coenzyme B. This chain is Probable methanogen homoaconitase large subunit (hacA), found in Methanothermobacter thermautotrophicus (strain ATCC 29096 / DSM 1053 / JCM 10044 / NBRC 100330 / Delta H) (Methanobacterium thermoautotrophicum).